Here is a 268-residue protein sequence, read N- to C-terminus: uncharacterized protein (268 aa).

This is an uncharacterized protein from Methanocaldococcus jannaschii (strain ATCC 43067 / DSM 2661 / JAL-1 / JCM 10045 / NBRC 100440) (Methanococcus jannaschii).